The chain runs to 526 residues: Thymocyte selection-associated high mobility group box protein TOX (526 aa).

The segment covering 194 to 203 has biased composition (polar residues); the sequence is NMGGTNVAHN. The segment at 194–264 is disordered; that stretch reads NMGGTNVAHN…KKDPNEPQKP (71 aa). Positions 209 to 220 are enriched in low complexity; sequence GSKSATPSPSSS. Positions 228–245 are enriched in basic and acidic residues; sequence DASKINGGEKRPASDMGK. The Nuclear localization signal signature appears at 237–256; the sequence is KRPASDMGKKPKTPKKKKKK. Basic residues predominate over residues 246–256; it reads KPKTPKKKKKK. The segment at residues 261 to 329 is a DNA-binding region (HMG box); that stretch reads PQKPVSAYAL…EYLKQLAAYR (69 aa).

This sequence belongs to the high motility group (HMG) box superfamily. Interacts with HBO1 complex composed at least of KAT7/HBO1, ING4, MEAF6, and JADE2; this complex is involved in histone acetylation. Interacts with DNMT1, LEO1, PAF1, SAP130 and SIN3A; these interactors regulate chromatin remodeling. Interacts with an array of proteins involved in RNA processing and translation and DNA replication. Expressed in neurons of the subventricular zone (at protein level). Expressed in distinct subpopulations of thymocytes undergoing positive selection: double CD4-positive CD8-positive (DP) cells, CD4-positive CD8-low transitional cells and in single CD4-positive and CD8-positive cells (at protein level). Expressed in ILC progenitors and mature ILC subsets: ILC1, ILC2 and ILC3 (at protein level). Expressed in lymphoid tissue-inducer cells and bone marrow NK cell subsets. Abundant in thymus, liver and brain. Also detected in small intestine, spleen, stomach and testis. Highly expressed in tumor-infiltrating CD8-positive T cells (at protein level).

Its subcellular location is the nucleus. Its function is as follows. Transcriptional regulator with a major role in neural stem cell commitment and corticogenesis as well as in lymphoid cell development and lymphoid tissue organogenesis. Binds to GC-rich DNA sequences in the proximity of transcription start sites and may alter chromatin structure, modifying access of transcription factors to DNA. During cortical development, controls the neural stem cell pool by inhibiting the switch from proliferative to differentiating progenitors. Beyond progenitor cells, promotes neurite outgrowth in newborn neurons migrating to reach the cortical plate. May activate or repress critical genes for neural stem cell fate such as SOX2, EOMES and ROBO2. Plays an essential role in the development of lymphoid tissue-inducer (LTi) cells, a subset necessary for the formation of secondary lymphoid organs: peripheral lymph nodes and Peyer's patches. Acts as a developmental checkpoint and regulates thymocyte positive selection toward T cell lineage commitment. Required for the development of various T cell subsets, including CD4-positive helper T cells, CD8-positive cytotoxic T cells, regulatory T cells and CD1D-dependent natural killer T (NKT) cells. Required for the differentiation of common lymphoid progenitors (CMP) to innate lymphoid cells (ILC). May regulate the NOTCH-mediated gene program, promoting differentiation of the ILC lineage. Required at the progenitor phase of NK cell development in the bone marrow to specify NK cell lineage commitment. Upon chronic antigen stimulation, diverts T cell development by promoting the generation of exhaustive T cells, while suppressing effector and memory T cell programming. May regulate the expression of genes encoding inhibitory receptors such as PDCD1 and induce the exhaustion program, to prevent the overstimulation of T cells and activation-induced cell death. This Mus musculus (Mouse) protein is Thymocyte selection-associated high mobility group box protein TOX.